A 188-amino-acid chain; its full sequence is Elongation factor P (188 aa).

The interval 139 to 163 (PVTKGQTASSSYKPATLSNGVRTQV) is disordered. A compositionally biased stretch (polar residues) spans 142–160 (KGQTASSSYKPATLSNGVR).

It belongs to the elongation factor P family.

The protein localises to the cytoplasm. It functions in the pathway protein biosynthesis; polypeptide chain elongation. In terms of biological role, involved in peptide bond synthesis. Stimulates efficient translation and peptide-bond synthesis on native or reconstituted 70S ribosomes in vitro. Probably functions indirectly by altering the affinity of the ribosome for aminoacyl-tRNA, thus increasing their reactivity as acceptors for peptidyl transferase. This chain is Elongation factor P, found in Methylobacterium nodulans (strain LMG 21967 / CNCM I-2342 / ORS 2060).